Consider the following 197-residue polypeptide: Cell division protein SepF (197 aa).

A disordered region spans residues 15–89 (EEEEVEGPEE…RMNNNSKNNS (75 aa)). Residues 22 to 42 (PEERESSRSRERVQEREDYNR) are compositionally biased toward basic and acidic residues. The span at 43–73 (NENQATPQTFNNKQQAIKSVPQKNTLRSNTT) shows a compositional bias: polar residues. Residues 80 to 89 (RMNNNSKNNS) are compositionally biased toward low complexity.

This sequence belongs to the SepF family. As to quaternary structure, homodimer. Interacts with FtsZ.

The protein resides in the cytoplasm. Its function is as follows. Cell division protein that is part of the divisome complex and is recruited early to the Z-ring. Probably stimulates Z-ring formation, perhaps through the cross-linking of FtsZ protofilaments. Its function overlaps with FtsA. In Staphylococcus epidermidis (strain ATCC 35984 / DSM 28319 / BCRC 17069 / CCUG 31568 / BM 3577 / RP62A), this protein is Cell division protein SepF.